A 1166-amino-acid chain; its full sequence is Poly [ADP-ribose] polymerase tankyrase-2 (1166 aa).

ANK repeat units follow at residues 57–89 (RKST…ARDD), 90–122 (GGLI…ARDN), and 123–155 (WNYT…IRNT). Asparagine 203 bears the (3S)-3-hydroxyasparagine; by HIF1AN; partial mark. ANK repeat units follow at residues 210–242 (RKST…AKDK), 243–275 (GDLV…AMDL), 276–308 (WQFT…LLNC), 363–398 (THET…EKTK), 399–431 (EFLT…ALDN), and 432–464 (LGQT…IISL). Residue histidine 238 is modified to (3S)-3-hydroxyhistidine; by HIF1AN; partial. A (3S)-3-hydroxyasparagine; by HIF1AN; partial modification is found at asparagine 271. Asparagine 427 is modified ((3S)-3-hydroxyasparagine; by HIF1AN; partial). Asparagine 518 is subject to (3S)-3-hydroxyasparagine; by HIF1AN; partial. ANK repeat units follow at residues 525-557 (RQST…AKDK), 558-590 (GGLV…VADL), and 591-623 (WKFT…KKNR). Residues 545-553 (LLQHGADVH) are HIF1AN-binding. The residue at position 553 (histidine 553) is a (3S)-3-hydroxyhistidine; by HIF1AN; partial. Position 586 is a (3S)-3-hydroxyasparagine; by HIF1AN; partial (asparagine 586). (3S)-3-hydroxyasparagine; by HIF1AN; partial is present on residues asparagine 671, asparagine 706, and asparagine 739. ANK repeat units lie at residues 678–710 (RHST…AQDK), 711–743 (GGLI…ATDK), and 744–776 (WAFT…LKNQ). Positions 819–839 (GATADALSSGPSSPSSLSAAS) are disordered. Over residues 822–839 (ADALSSGPSSPSSLSAAS) the composition is skewed to low complexity. One can recognise an SAM domain in the interval 873–936 (GVDFSITQFV…IKGVERLISG (64 aa)). In terms of domain architecture, PARP catalytic spans 959 to 1164 (SPDDKEFQSV…YQIMRPEGMV (206 aa)). Zn(2+) contacts are provided by cysteine 1081, histidine 1084, cysteine 1089, and cysteine 1092.

This sequence belongs to the ARTD/PARP family. In terms of assembly, oligomerizes and associates with TNKS. Interacts with the cytoplasmic domain of LNPEP/Otase in SLC2A4/GLUT4-vesicles. Binds to the N-terminus of Grb14 and TRF1 with its ankyrin repeat region. Interacts with HIF1AN. Interacts with RNF146; this interaction leads to ubiquitination and proteasomal degradation. Interacts with NUMA1. Ubiquitinated at 'Lys-48' and 'Lys-63' by RNF146 when auto-poly-ADP-ribosylated; this leads to degradation. Deubiquitinated by USP25; leading to stabilization. In terms of processing, ADP-ribosylated (-auto). Poly-ADP-ribosylated protein is recognized by RNF146, followed by ubiquitination. Post-translationally, the crystallographic evidence suggests that the 3-hydroxyhistidine may be the (3S) stereoisomer. Highly expressed in placenta, skeletal muscle, liver, brain, kidney, heart, thymus, spinal cord, lung, peripheral blood leukocytes, pancreas, lymph nodes, spleen, prostate, testis, ovary, small intestine, colon, mammary gland, breast and breast carcinoma, and in common-type meningioma. Highly expressed in fetal liver, heart and brain.

The protein resides in the cytoplasm. It is found in the golgi apparatus membrane. The protein localises to the nucleus. It localises to the chromosome. Its subcellular location is the telomere. It carries out the reaction NAD(+) + (ADP-D-ribosyl)n-acceptor = nicotinamide + (ADP-D-ribosyl)n+1-acceptor + H(+).. The enzyme catalyses L-aspartyl-[protein] + NAD(+) = 4-O-(ADP-D-ribosyl)-L-aspartyl-[protein] + nicotinamide. It catalyses the reaction L-glutamyl-[protein] + NAD(+) = 5-O-(ADP-D-ribosyl)-L-glutamyl-[protein] + nicotinamide. Its activity is regulated as follows. Specifically inhibited by XAV939, a small molecule, leading to inhibit the Wnt signaling pathway by stabilizing AXIN1 and AXIN2. Inhibited by talazoparib. Poly-ADP-ribosyltransferase involved in various processes such as Wnt signaling pathway, telomere length and vesicle trafficking. Acts as an activator of the Wnt signaling pathway by mediating poly-ADP-ribosylation of AXIN1 and AXIN2, 2 key components of the beta-catenin destruction complex: poly-ADP-ribosylated target proteins are recognized by RNF146, which mediates their ubiquitination and subsequent degradation. Also mediates poly-ADP-ribosylation of BLZF1 and CASC3, followed by recruitment of RNF146 and subsequent ubiquitination. Mediates poly-ADP-ribosylation of TERF1, thereby contributing to the regulation of telomere length. Stimulates 26S proteasome activity. The chain is Poly [ADP-ribose] polymerase tankyrase-2 from Homo sapiens (Human).